A 74-amino-acid polypeptide reads, in one-letter code: Psi-conotoxin PrIIIE (74 aa).

Positions 1–19 (MSKLGVLLTICLLLFPITA) are cleaved as a signal peptide. A propeptide spanning residues 20–50 (LPVDGDQPADRPVERMQDNISSEQHPFFEKR) is cleaved from the precursor. 3 disulfide bridges follow: Cys-54–Cys-66, Cys-55–Cys-71, and Cys-61–Cys-72. Cys-72 carries the cysteine amide modification.

Belongs to the conotoxin M superfamily. In terms of tissue distribution, expressed by the venom duct.

Its subcellular location is the secreted. Psi-conotoxins act on postsynaptic membranes, and act as non-competitive antagonist of nicotinic acetylcholine receptors (nAChR). Reversibly inhibits both adult- and fetal-types nAChR. The inhibition potency against the adult- (alpha-1/beta-1/epsilon/delta) is higher than against the fetal-type (alpha-1/beta-1/gamma/delta). Induces flaccid paralysis in goldfish, but does not induce any remarkable behavior in mice and does not block action potential in directly stimulated frog muscle preparations. This Conus parius (Cone snail) protein is Psi-conotoxin PrIIIE.